The primary structure comprises 184 residues: ATP-dependent protease subunit HslV (184 aa).

Residue Thr12 is part of the active site. Na(+) contacts are provided by Ala166, Cys169, and Thr172.

It belongs to the peptidase T1B family. HslV subfamily. As to quaternary structure, a double ring-shaped homohexamer of HslV is capped on each side by a ring-shaped HslU homohexamer. The assembly of the HslU/HslV complex is dependent on binding of ATP.

The protein resides in the cytoplasm. The catalysed reaction is ATP-dependent cleavage of peptide bonds with broad specificity.. Allosterically activated by HslU binding. Protease subunit of a proteasome-like degradation complex believed to be a general protein degrading machinery. The sequence is that of ATP-dependent protease subunit HslV from Brucella canis (strain ATCC 23365 / NCTC 10854 / RM-666).